The chain runs to 369 residues: Beta-1,3-galactosyltransferase 9 (369 aa).

Topologically, residues 1 to 12 (MQVTFCRLRTHQ) are cytoplasmic. Residues 13 to 33 (WCFILFNVILFHALLFGTDFV) form a helical; Signal-anchor for type II membrane protein membrane-spanning segment. Topologically, residues 34–369 (EEYFLHSLPY…IKNNLMYFAD (336 aa)) are lumenal. N-linked (GlcNAc...) asparagine glycans are attached at residues N66, N96, and N109.

This sequence belongs to the glycosyltransferase 31 family.

The protein localises to the golgi apparatus membrane. Its function is as follows. Putative glycosyltransferase that could catalyze the transfer of galactose residues from UDP-alpha-D-galactose. This Homo sapiens (Human) protein is Beta-1,3-galactosyltransferase 9.